A 617-amino-acid chain; its full sequence is MAELETGAVPIREEFLVKQDGNKKRKRKERGQNKRREKIHVKENNALCPAISIGNECPYKENCKFPHDVEAYLATKAPDIGDKCPIFERYGVCPAGFKCRWLAGHVVINADGKYELIKKPDGQFTLFTVNTVGKEVQRKLRTKQLDLSKAESIISAVLGEEKPDPSSKVSNIPEENRDATSAISEGKETESVSLEETGVLKNQTVSVNVDLKEISSQARSNIALPTLRPQEKNLIDWRDRKILAPLTTVGNPPFRRLCGSLGADTFYSEMAMCYPLMQGHQPEWALVRGLNYEREMMRGGRRGILGVQLATGKLWQATKTAQVIAEQCDGVDFLDLNCGCPIDLVFRQGAGSSLLENPGRLLRNLQGMDAVSGQIPVTVKLRMGNKDDHPVVKNLIGRIFNETNTSAATLHGRSRQQRYSKNANWDYIGEIASKVKSMNERIDELPEDSLRTQPLSLIGNGDCYSWQDWYDGVNKGVDTVMIARGALVKPWIFEEIEARQFIDKSSTQRLEMLEQYCNNGLEYWGSDSQGVNTTRRFFLEFMSFFHRYTPIALYEVQRPRLNDRPPLYTARDEMETLLASNKVTDWVKLSEFFLGPTPERFTFTPKHKSNSVEEAEG.

Residues 42-70 (KENNALCPAISIGNECPYKENCKFPHDVE) form a C3H1-type zinc finger. Residues 160 to 193 (EEKPDPSSKVSNIPEENRDATSAISEGKETESVS) form a disordered region. Residues 245–247 (PLT) and Q308 contribute to the FMN site. The active-site Proton donor is the C340. Residues K380, H411, 460 to 462 (NGD), and 483 to 484 (AR) each bind FMN.

Belongs to the Dus family. Dus3 subfamily. The cofactor is FMN.

It is found in the cytoplasm. Its subcellular location is the nucleus. The catalysed reaction is 5,6-dihydrouridine(47) in tRNA + NAD(+) = uridine(47) in tRNA + NADH + H(+). It carries out the reaction 5,6-dihydrouridine(47) in tRNA + NADP(+) = uridine(47) in tRNA + NADPH + H(+). The enzyme catalyses a 5,6-dihydrouridine in mRNA + NAD(+) = a uridine in mRNA + NADH + H(+). It catalyses the reaction a 5,6-dihydrouridine in mRNA + NADP(+) = a uridine in mRNA + NADPH + H(+). Catalyzes the synthesis of dihydrouridine, a modified base, in various RNAs, such as tRNAs and mRNAs. Modifies the uridine in position 47 (U47) in the D-loop of tRNAs. Also able to mediate formation of dihydrouridine outside of the D-loop of tRNAs. Catalyzes the synthesis of dihydrouridine in some mRNAs, thereby affecting their translation. Dus3-mediated dihydrouridylation of the mRNA encoding alpha-tubulin nda2 is required for meiotic chromosome segregation. The polypeptide is tRNA-dihydrouridine(47) synthase [NAD(P)(+)] (Schizosaccharomyces pombe (strain 972 / ATCC 24843) (Fission yeast)).